The primary structure comprises 436 residues: Acetyl-CoA decarbonylase/synthase complex subunit delta (436 aa).

The protein belongs to the CdhD family. In terms of assembly, heterodimer of delta and gamma chains. The ACDS complex is made up of alpha, epsilon, beta, gamma and delta chains with a probable stoichiometry of (alpha(2)epsilon(2))(4)-beta(8)-(gamma(1)delta(1))(8).

Its pathway is one-carbon metabolism; methanogenesis from acetate. Functionally, part of a complex that catalyzes the reversible cleavage of acetyl-CoA, allowing growth on acetate as sole source of carbon and energy. Probably maintains the overall quaternary structure of the ACDS complex. This is Acetyl-CoA decarbonylase/synthase complex subunit delta from Methanosarcina mazei (strain ATCC BAA-159 / DSM 3647 / Goe1 / Go1 / JCM 11833 / OCM 88) (Methanosarcina frisia).